The following is a 561-amino-acid chain: DNA ligase B (561 aa).

The N6-AMP-lysine intermediate role is filled by lysine 125.

This sequence belongs to the NAD-dependent DNA ligase family. LigB subfamily.

It carries out the reaction NAD(+) + (deoxyribonucleotide)n-3'-hydroxyl + 5'-phospho-(deoxyribonucleotide)m = (deoxyribonucleotide)n+m + AMP + beta-nicotinamide D-nucleotide.. Its function is as follows. Catalyzes the formation of phosphodiester linkages between 5'-phosphoryl and 3'-hydroxyl groups in double-stranded DNA using NAD as a coenzyme and as the energy source for the reaction. This Salmonella arizonae (strain ATCC BAA-731 / CDC346-86 / RSK2980) protein is DNA ligase B.